The chain runs to 156 residues: Small ribosomal subunit protein uS7 (156 aa).

The protein belongs to the universal ribosomal protein uS7 family. As to quaternary structure, part of the 30S ribosomal subunit. Contacts proteins S9 and S11.

Its function is as follows. One of the primary rRNA binding proteins, it binds directly to 16S rRNA where it nucleates assembly of the head domain of the 30S subunit. Is located at the subunit interface close to the decoding center, probably blocks exit of the E-site tRNA. The polypeptide is Small ribosomal subunit protein uS7 (Mycobacterium tuberculosis (strain CDC 1551 / Oshkosh)).